We begin with the raw amino-acid sequence, 609 residues long: Proline--tRNA ligase (609 aa).

Belongs to the class-II aminoacyl-tRNA synthetase family. ProS type 1 subfamily. In terms of assembly, homodimer.

The protein localises to the cytoplasm. It catalyses the reaction tRNA(Pro) + L-proline + ATP = L-prolyl-tRNA(Pro) + AMP + diphosphate. Functionally, catalyzes the attachment of proline to tRNA(Pro) in a two-step reaction: proline is first activated by ATP to form Pro-AMP and then transferred to the acceptor end of tRNA(Pro). As ProRS can inadvertently accommodate and process non-cognate amino acids such as alanine and cysteine, to avoid such errors it has two additional distinct editing activities against alanine. One activity is designated as 'pretransfer' editing and involves the tRNA(Pro)-independent hydrolysis of activated Ala-AMP. The other activity is designated 'posttransfer' editing and involves deacylation of mischarged Ala-tRNA(Pro). The misacylated Cys-tRNA(Pro) is not edited by ProRS. This chain is Proline--tRNA ligase, found in Synechococcus sp. (strain JA-2-3B'a(2-13)) (Cyanobacteria bacterium Yellowstone B-Prime).